Consider the following 91-residue polypeptide: Acylphosphatase (91 aa).

The Acylphosphatase-like domain occupies 4–91 (RYLIKVLGRV…DNEKSFKIVY (88 aa)). Catalysis depends on residues Arg19 and Asn37.

It belongs to the acylphosphatase family.

It catalyses the reaction an acyl phosphate + H2O = a carboxylate + phosphate + H(+). This chain is Acylphosphatase (acyP), found in Clostridium acetobutylicum (strain ATCC 824 / DSM 792 / JCM 1419 / IAM 19013 / LMG 5710 / NBRC 13948 / NRRL B-527 / VKM B-1787 / 2291 / W).